Consider the following 337-residue polypeptide: D-alanine--D-alanine ligase (337 aa).

In terms of domain architecture, ATP-grasp spans 124 to 330 (KMWFSALGIP…FTEYLSLVIN (207 aa)). 154–209 (ALAQWGSIFVKAASQGSSVGCYKVDDSAKVAGVLKDAFGYAPYVIVEKTIKARELE) lines the ATP pocket. Mg(2+) is bound by residues Asp284, Glu297, and Asn299.

It belongs to the D-alanine--D-alanine ligase family. Mg(2+) serves as cofactor. It depends on Mn(2+) as a cofactor.

Its subcellular location is the cytoplasm. The catalysed reaction is 2 D-alanine + ATP = D-alanyl-D-alanine + ADP + phosphate + H(+). It participates in cell wall biogenesis; peptidoglycan biosynthesis. In terms of biological role, cell wall formation. The protein is D-alanine--D-alanine ligase of Shewanella baltica (strain OS185).